Consider the following 581-residue polypeptide: MVLKVFFPTCCASADSGLLVGRWVPGQSSAVILAVVHFPFIPIQVKELLAQVQKASQVPVAVLGTWCHRQQEPQESLGNFLEGLGTIFSHDPWLQLCRERGTRLWSCKATYPQMSNPLDMHPEEQVMLIFYDQRKLLLSWLHPPPVLPACQMGDTTASTGGLADIFDTVARSEVLFRNDQFDERPVRLSHWQSEGVEASILVELAKRASGPVCLLLASLLSLISAASACRLWKLWPLSFIRSKLSTCEQLHHRLKHLSFIFSTEKAQNPMQLMRKANMLVSVLLDVALGLLLLSWLHSNNRIGQLANALVPVADRVAEELQHLLQWLMGAPAGLKMNRALDQVLGRFFLYHIHLWISYIHLMSPFIEHILWHVGLSACLGLTVALSIFSDIIALLTFHIYCFYVYGARLYCLKIYGLSSLWRLFRGKKWNVLRQRVDSCSYDLDQLFIGTLLFTILVFLLPTTALYYLVFTLLRLLVITVQGLIHLLVDLINSLPLYSLGLRLCRPYRLAAGVKFRVLEKEAGRPLRLLMQINPLSYNHVMHIYRLPRCGCHPKHSWGTLCRKLVFGELIYPWRQREDKQD.

Helical transmembrane passes span Ala276–Ser298, Leu344–Ile366, Leu381–Tyr403, Leu446–Leu468, and Ile478–Gly500.

The protein belongs to the PIGQ family. As to quaternary structure, component of the glycosylphosphatidylinositol-N-acetylglucosaminyltransferase (GPI-GnT) complex composed at least by PIGA, PIGC, PIGH, PIGP, PIGQ, PIGY and DPM2. Interacts with PIGA, PIGH and PIGC.

Its subcellular location is the membrane. The protein operates within glycolipid biosynthesis; glycosylphosphatidylinositol-anchor biosynthesis. Functionally, part of the glycosylphosphatidylinositol-N-acetylglucosaminyltransferase (GPI-GnT) complex that catalyzes the transfer of N-acetylglucosamine from UDP-N-acetylglucosamine to phosphatidylinositol and participates in the first step of GPI biosynthesis. The polypeptide is Phosphatidylinositol N-acetylglucosaminyltransferase subunit Q (Mus musculus (Mouse)).